The sequence spans 34 residues: IRCQGSNQCYGHCREKTGCMNGKCINRVCKCYGC.

Cystine bridges form between Cys3–Cys24, Cys9–Cys29, Cys13–Cys31, and Cys19–Cys34.

It belongs to the short scorpion toxin superfamily. Potassium channel inhibitor family. Alpha-KTx 06 subfamily. As to expression, expressed by the venom gland.

Its subcellular location is the secreted. Functionally, this toxin reversibly blocks Shaker B potassium-channels (expressed in insect Sf9 cells) with a Kd of 96.6 nM, and presents an even better affinity toward hKv1.3 (KCNA3), blocking it with a Kd of 17.7 nM. In Opisthacanthus cayaporum (South American scorpion), this protein is Potassium channel toxin alpha-KTx 6.17.